A 116-amino-acid chain; its full sequence is Large ribosomal subunit protein bL17 (116 aa).

It belongs to the bacterial ribosomal protein bL17 family. Part of the 50S ribosomal subunit. Contacts protein L32.

This is Large ribosomal subunit protein bL17 from Prochlorococcus marinus (strain SARG / CCMP1375 / SS120).